Consider the following 875-residue polypeptide: Lysine-specific demethylase JMJ26 (875 aa).

Positions 31 to 103 (KPVEATSLSS…RSSVKKRATT (73 aa)) are disordered. A Nuclear localization signal motif is present at residues 62–69 (RKRSKADE). Positions 79-93 (KCDDENKCEENEKKQ) are enriched in basic and acidic residues. Zn(2+) contacts are provided by Cys-193, Cys-196, Cys-207, Cys-210, Cys-216, Cys-219, Cys-236, Cys-239, Cys-322, Cys-325, Cys-339, and Cys-347. An RING-type; degenerate zinc finger spans residues 193–240 (CHQCSKGERRYLFICTFCEVRLYCFPCIKKWYPHLSTDDILEKCPFCR). The B box-type; degenerate zinc-finger motif lies at 317-347 (EERVFCNHCATSIVDLHRSCPKCSYELCLNC). The JmjC domain maps to 614–837 (PRSGILNIAT…ECLRLTDEFR (224 aa)). His-658, Asp-660, and His-805 together coordinate Fe cation.

The protein belongs to the JARID1 histone demethylase family. It depends on Fe(2+) as a cofactor. Expressed in inflorescences, roots, siliques, leaves and stems.

It is found in the nucleus. Its function is as follows. May function as histone H3 lysine demethylase and be involved in regulation of gene expression. The sequence is that of Lysine-specific demethylase JMJ26 from Arabidopsis thaliana (Mouse-ear cress).